The following is a 295-amino-acid chain: Pantothenate synthetase (295 aa).

Position 29-36 (29-36 (MGALHSGH)) interacts with ATP. The Proton donor role is filled by H36. Q60 lines the (R)-pantoate pocket. Q60 contributes to the beta-alanine binding site. Residue 158 to 161 (GQKD) participates in ATP binding. Position 164 (Q164) interacts with (R)-pantoate. ATP contacts are provided by residues V187 and 195 to 198 (LSSR).

It belongs to the pantothenate synthetase family. Homodimer.

The protein localises to the cytoplasm. The enzyme catalyses (R)-pantoate + beta-alanine + ATP = (R)-pantothenate + AMP + diphosphate + H(+). Its pathway is cofactor biosynthesis; (R)-pantothenate biosynthesis; (R)-pantothenate from (R)-pantoate and beta-alanine: step 1/1. In terms of biological role, catalyzes the condensation of pantoate with beta-alanine in an ATP-dependent reaction via a pantoyl-adenylate intermediate. The sequence is that of Pantothenate synthetase from Paenarthrobacter aurescens (strain TC1).